A 252-amino-acid chain; its full sequence is Probable phosphatase Shewmr4_2619 (252 aa).

Positions 8, 10, 16, 41, 74, 102, 132, 193, and 195 each coordinate Zn(2+).

Belongs to the PHP family. It depends on Zn(2+) as a cofactor.

This chain is Probable phosphatase Shewmr4_2619, found in Shewanella sp. (strain MR-4).